We begin with the raw amino-acid sequence, 28 residues long: leu operon leader peptide (28 aa).

In terms of biological role, involved in control of the biosynthesis of leucine. This is leu operon leader peptide (leuL) from Salmonella typhimurium (strain LT2 / SGSC1412 / ATCC 700720).